We begin with the raw amino-acid sequence, 37 residues long: Omega-sparatoxin-Hv1a (37 aa).

3 disulfide bridges follow: C4-C18, C11-C23, and C17-C33.

Expressed by the venom gland.

The protein localises to the secreted. Functionally, blocks calcium channels (Cav). This is Omega-sparatoxin-Hv1a from Heteropoda venatoria (Brown huntsman spider).